We begin with the raw amino-acid sequence, 410 residues long: Arginine deiminase (410 aa).

Cys-400 (amidino-cysteine intermediate) is an active-site residue.

Belongs to the arginine deiminase family.

It localises to the cytoplasm. The catalysed reaction is L-arginine + H2O = L-citrulline + NH4(+). It participates in amino-acid degradation; L-arginine degradation via ADI pathway; carbamoyl phosphate from L-arginine: step 1/2. The chain is Arginine deiminase from Streptococcus agalactiae serotype III (strain NEM316).